The chain runs to 177 residues: UPF0200 protein STK_09500 (177 aa).

11–18 (GMPGSGKG) is a binding site for ATP.

The protein belongs to the UPF0200 family.

This chain is UPF0200 protein STK_09500, found in Sulfurisphaera tokodaii (strain DSM 16993 / JCM 10545 / NBRC 100140 / 7) (Sulfolobus tokodaii).